A 630-amino-acid chain; its full sequence is Heat shock cognate 70 kDa protein 3 (630 aa).

The interval 611–630 (FYQGNNNPKPTTTTFNQDLD) is disordered. Low complexity predominate over residues 615–630 (NNNPKPTTTTFNQDLD).

The protein belongs to the heat shock protein 70 family.

Functionally, may function in protein folding and assembly, and disassembly of protein complexes. The polypeptide is Heat shock cognate 70 kDa protein 3 (Dictyostelium discoideum (Social amoeba)).